The following is a 325-amino-acid chain: Ribose-phosphate pyrophosphokinase (325 aa).

ATP contacts are provided by residues 45 to 47 and 104 to 105; these read NGE and RQ. The Mg(2+) site is built by H138 and D178. Residue K202 is part of the active site. D-ribose 5-phosphate contacts are provided by residues R204, D230, and 234–238; that span reads DTGGT.

Belongs to the ribose-phosphate pyrophosphokinase family. Class I subfamily. Homohexamer. Mg(2+) serves as cofactor.

The protein localises to the cytoplasm. The catalysed reaction is D-ribose 5-phosphate + ATP = 5-phospho-alpha-D-ribose 1-diphosphate + AMP + H(+). Its pathway is metabolic intermediate biosynthesis; 5-phospho-alpha-D-ribose 1-diphosphate biosynthesis; 5-phospho-alpha-D-ribose 1-diphosphate from D-ribose 5-phosphate (route I): step 1/1. Its function is as follows. Involved in the biosynthesis of the central metabolite phospho-alpha-D-ribosyl-1-pyrophosphate (PRPP) via the transfer of pyrophosphoryl group from ATP to 1-hydroxyl of ribose-5-phosphate (Rib-5-P). The protein is Ribose-phosphate pyrophosphokinase of Corynebacterium efficiens (strain DSM 44549 / YS-314 / AJ 12310 / JCM 11189 / NBRC 100395).